The following is a 574-amino-acid chain: Phosphoenolpyruvate-protein phosphotransferase (574 aa).

The Tele-phosphohistidine intermediate role is filled by His-190. Residues Arg-297 and Arg-333 each coordinate phosphoenolpyruvate. Glu-432 and Asp-456 together coordinate Mg(2+). Residues 455 to 456 and Arg-466 each bind phosphoenolpyruvate; that span reads ND. The active-site Proton donor is the Cys-503.

Belongs to the PEP-utilizing enzyme family. As to quaternary structure, homodimer. Requires Mg(2+) as cofactor.

Its subcellular location is the cytoplasm. It carries out the reaction L-histidyl-[protein] + phosphoenolpyruvate = N(pros)-phospho-L-histidyl-[protein] + pyruvate. General (non sugar-specific) component of the phosphoenolpyruvate-dependent sugar phosphotransferase system (sugar PTS). This major carbohydrate active-transport system catalyzes the phosphorylation of incoming sugar substrates concomitantly with their translocation across the cell membrane. Enzyme I transfers the phosphoryl group from phosphoenolpyruvate (PEP) to the phosphoryl carrier protein (HPr). The chain is Phosphoenolpyruvate-protein phosphotransferase (ptsI) from Latilactobacillus sakei (Lactobacillus sakei).